A 143-amino-acid polypeptide reads, in one-letter code: Large ribosomal subunit protein uL13 (143 aa).

Belongs to the universal ribosomal protein uL13 family. In terms of assembly, part of the 50S ribosomal subunit.

Functionally, this protein is one of the early assembly proteins of the 50S ribosomal subunit, although it is not seen to bind rRNA by itself. It is important during the early stages of 50S assembly. The protein is Large ribosomal subunit protein uL13 of Prochlorococcus marinus subsp. pastoris (strain CCMP1986 / NIES-2087 / MED4).